The sequence spans 261 residues: Glutamate 5-kinase (261 aa).

Lys-7 contributes to the ATP binding site. Substrate-binding residues include Ser-46, Asp-131, and Asn-147. Residues 167-168 (SD) and 209-215 (TGGIVTK) each bind ATP.

The protein belongs to the glutamate 5-kinase family.

It localises to the cytoplasm. The enzyme catalyses L-glutamate + ATP = L-glutamyl 5-phosphate + ADP. It participates in amino-acid biosynthesis; L-proline biosynthesis; L-glutamate 5-semialdehyde from L-glutamate: step 1/2. Functionally, catalyzes the transfer of a phosphate group to glutamate to form L-glutamate 5-phosphate. The polypeptide is Glutamate 5-kinase (Wolinella succinogenes (strain ATCC 29543 / DSM 1740 / CCUG 13145 / JCM 31913 / LMG 7466 / NCTC 11488 / FDC 602W) (Vibrio succinogenes)).